Reading from the N-terminus, the 291-residue chain is B3 domain-containing protein At2g16210 (291 aa).

Positions 19-114 (FFKVVQSINV…HFTVNIFKLD (96 aa)) form a DNA-binding region, TF-B3 1. The span at 149-159 (VSSNRGQTTAA) shows a compositional bias: polar residues. The interval 149–182 (VSSNRGQTTAAESKGRKLNLGKRAAKESQSSKRT) is disordered. The span at 172–182 (AAKESQSSKRT) shows a compositional bias: basic and acidic residues. Residues 200 to 291 (AAAFTILFKQ…KELLLVVSKP (92 aa)) constitute a DNA-binding region (TF-B3 2).

The protein resides in the nucleus. In Arabidopsis thaliana (Mouse-ear cress), this protein is B3 domain-containing protein At2g16210.